Reading from the N-terminus, the 208-residue chain is MARYRGPVEKIERRLDADLGLKGERRLSGKSALEKRPFAPGQHGQRRAKISEYGLQLREKQKVKFMYGISEKQFRNYFKEAVRREGNTGAILISLIEQRLDNVVFRMGFATTRANARQFTTHGHVLVDGKKVDIPSYLVKPGQKIEIKEKSKSNPQVVRALELTNQTGMVDWVNVDKDKVFGIFTRIPAREEVVIPVEERLIVELYSK.

Positions 98–161 (QRLDNVVFRM…KSNPQVVRAL (64 aa)) constitute an S4 RNA-binding domain.

Belongs to the universal ribosomal protein uS4 family. In terms of assembly, part of the 30S ribosomal subunit. Contacts protein S5. The interaction surface between S4 and S5 is involved in control of translational fidelity.

Its function is as follows. One of the primary rRNA binding proteins, it binds directly to 16S rRNA where it nucleates assembly of the body of the 30S subunit. With S5 and S12 plays an important role in translational accuracy. The protein is Small ribosomal subunit protein uS4 of Aliarcobacter butzleri (strain RM4018) (Arcobacter butzleri).